Consider the following 187-residue polypeptide: Ribosome-recycling factor (187 aa).

This sequence belongs to the RRF family.

The protein localises to the cytoplasm. Functionally, responsible for the release of ribosomes from messenger RNA at the termination of protein biosynthesis. May increase the efficiency of translation by recycling ribosomes from one round of translation to another. The sequence is that of Ribosome-recycling factor from Methylorubrum populi (strain ATCC BAA-705 / NCIMB 13946 / BJ001) (Methylobacterium populi).